Reading from the N-terminus, the 640-residue chain is Putative solute carrier organic anion transporter family member 1B7 (640 aa).

Residues M1 to S16 lie on the Extracellular side of the membrane. The chain crosses the membrane as a helical span at residues S17–V37. The Cytoplasmic segment spans residues S38–L49. Residues I50–F70 form a helical membrane-spanning segment. At M71–M123 the chain is on the extracellular side. Residues W124 to L144 traverse the membrane as a helical segment. The Cytoplasmic portion of the chain corresponds to G145 to S159. A helical membrane pass occupies residues L160–G180. Residues S181–W211 lie on the Extracellular side of the membrane. A helical transmembrane segment spans residues W212–L232. Residues P233–V292 are Cytoplasmic-facing. A Phosphoserine modification is found at S246. The chain crosses the membrane as a helical span at residues I293–I313. The Extracellular portion of the chain corresponds to K314 to F329. Residues L330–I350 form a helical membrane-spanning segment. Residues K351–K362 lie on the Cytoplasmic side of the membrane. Residues L363–C383 form a helical membrane-spanning segment. Residues E384–V492 are Extracellular-facing. The Kazal-like domain maps to D406 to E461. Cystine bridges form between C412/C442, C418/C438, and C427/C459. A helical transmembrane segment spans residues I493–I513. Topologically, residues R514 to K521 are cytoplasmic. The chain crosses the membrane as a helical span at residues A522–I542. Residues Y543–A577 lie on the Extracellular side of the membrane. The helical transmembrane segment at F578–F598 threads the bilayer. The Cytoplasmic segment spans residues V599–Q640. Position 636 is a phosphoserine (S636).

The protein belongs to the organo anion transporter (TC 2.A.60) family.

The protein resides in the cell membrane. The sequence is that of Putative solute carrier organic anion transporter family member 1B7 (SLCO1B7) from Homo sapiens (Human).